A 303-amino-acid polypeptide reads, in one-letter code: sn-1-specific diacylglycerol lipase ABHD11 (303 aa).

The N-terminal 22 residues, 1 to 22 (MLRWTRAWTAPYRGIGLSNSSF), are a transit peptide targeting the mitochondrion. One can recognise an AB hydrolase-1 domain in the interval 55-290 (PALVFLHGLF…NAGHWVHSDR (236 aa)). The residue at position 75 (Lys75) is an N6-succinyllysine. Residues Ser129, Asp225, and His284 each act as charge relay system in the active site.

Belongs to the AB hydrolase superfamily. As to quaternary structure, interacts with OGDH and DLST; this interaction maintains the functional lipoylation of the 2-oxoglutarate dehydrogenase complex. Phosphorylated.

The protein localises to the mitochondrion. Its subcellular location is the mitochondrion matrix. The enzyme catalyses a 1,3-diacyl-sn-glycerol + H2O = a 1-acyl-sn-glycerol + a fatty acid + H(+). The catalysed reaction is 1-octadecanoyl-2-(9Z-octadecenoyl)-sn-glycerol + H2O = 2-(9Z-octadecenoyl)-glycerol + octadecanoate + H(+). It catalyses the reaction 1-octadecanoyl-2-(4Z,7Z,10Z,13Z,16Z,19Z-docosahexaenoyl)-sn-glycerol + H2O = 2-(4Z,7Z,10Z,13Z,16Z,19Z-docosahexaenoyl)-glycerol + octadecanoate + H(+). It carries out the reaction a 1,2-diacyl-sn-glycerol + H2O = a 2-acylglycerol + a fatty acid + H(+). The enzyme catalyses 1,2-didecanoylglycerol + H2O = decanoylglycerol + decanoate + H(+). The catalysed reaction is 1-octadecanoyl-2-(5Z,8Z,11Z,14Z-eicosatetraenoyl)-sn-glycerol + H2O = 2-(5Z,8Z,11Z,14Z-eicosatetraenoyl)-glycerol + octadecanoate + H(+). The diacylglycerol lipase activity can be modulated by phosphorylation by cAMP-dependent protein kinase. Its function is as follows. Catalyzes the hydrolysis of diacylglycerol in vitro and may function as a key regulator in lipid metabolism, namely by regulating the intracellular levels of diacylglycerol. 1,2-diacyl-sn-glycerols are the preferred substrate over 1,3-diacyl-sn-glycerols. The enzyme hydrolyzes stearate in preference to palmitate from the sn-1 position of 1,2-diacyl-sn-glycerols. Maintains the functional lipoylation of the 2-oxoglutarate dehydrogenase complex (OGDHc) through its interaction with the OGDHc by preventing the formation of lipoyl adducts. In addition, is also required for the expansion and differentiation of embryonic stem cells (ESCs). The sequence is that of sn-1-specific diacylglycerol lipase ABHD11 from Bos taurus (Bovine).